Here is a 320-residue protein sequence, read N- to C-terminus: Lipoyl synthase (320 aa).

The span at 1–11 shows a compositional bias: polar residues; sequence MGGMNDLSSTP. Residues 1–24 form a disordered region; sequence MGGMNDLSSTPAPEGDRPARQRKP. A compositionally biased stretch (basic and acidic residues) spans 14-24; sequence EGDRPARQRKP. The [4Fe-4S] cluster site is built by cysteine 53, cysteine 58, cysteine 64, cysteine 79, cysteine 83, cysteine 86, and serine 293. Positions 65 to 282 constitute a Radical SAM core domain; that stretch reads WTKKHATVMI…GAIARAKGFL (218 aa).

The protein belongs to the radical SAM superfamily. Lipoyl synthase family. Requires [4Fe-4S] cluster as cofactor.

The protein localises to the cytoplasm. The catalysed reaction is [[Fe-S] cluster scaffold protein carrying a second [4Fe-4S](2+) cluster] + N(6)-octanoyl-L-lysyl-[protein] + 2 oxidized [2Fe-2S]-[ferredoxin] + 2 S-adenosyl-L-methionine + 4 H(+) = [[Fe-S] cluster scaffold protein] + N(6)-[(R)-dihydrolipoyl]-L-lysyl-[protein] + 4 Fe(3+) + 2 hydrogen sulfide + 2 5'-deoxyadenosine + 2 L-methionine + 2 reduced [2Fe-2S]-[ferredoxin]. It functions in the pathway protein modification; protein lipoylation via endogenous pathway; protein N(6)-(lipoyl)lysine from octanoyl-[acyl-carrier-protein]: step 2/2. In terms of biological role, catalyzes the radical-mediated insertion of two sulfur atoms into the C-6 and C-8 positions of the octanoyl moiety bound to the lipoyl domains of lipoate-dependent enzymes, thereby converting the octanoylated domains into lipoylated derivatives. In Erythrobacter litoralis (strain HTCC2594), this protein is Lipoyl synthase.